The chain runs to 253 residues: Acetylglutamate kinase (253 aa).

Substrate is bound by residues 37-38, Arg59, and Asn149; that span reads GG.

This sequence belongs to the acetylglutamate kinase family. ArgB subfamily.

The protein resides in the cytoplasm. The catalysed reaction is N-acetyl-L-glutamate + ATP = N-acetyl-L-glutamyl 5-phosphate + ADP. It participates in amino-acid biosynthesis; L-arginine biosynthesis; N(2)-acetyl-L-ornithine from L-glutamate: step 2/4. Its function is as follows. Catalyzes the ATP-dependent phosphorylation of N-acetyl-L-glutamate. The protein is Acetylglutamate kinase of Rubrobacter xylanophilus (strain DSM 9941 / JCM 11954 / NBRC 16129 / PRD-1).